Reading from the N-terminus, the 219-residue chain is Chloramphenicol acetyltransferase (219 aa).

Residue His193 is the Proton acceptor of the active site.

It belongs to the chloramphenicol acetyltransferase family. As to quaternary structure, homotrimer.

It carries out the reaction chloramphenicol + acetyl-CoA = chloramphenicol 3-acetate + CoA. This enzyme is an effector of chloramphenicol resistance in bacteria. The chain is Chloramphenicol acetyltransferase (cat) from Klebsiella sp.